Reading from the N-terminus, the 396-residue chain is Lipid-A-disaccharide synthase (396 aa).

The protein belongs to the LpxB family.

The catalysed reaction is a lipid X + a UDP-2-N,3-O-bis[(3R)-3-hydroxyacyl]-alpha-D-glucosamine = a lipid A disaccharide + UDP + H(+). It participates in bacterial outer membrane biogenesis; LPS lipid A biosynthesis. In terms of biological role, condensation of UDP-2,3-diacylglucosamine and 2,3-diacylglucosamine-1-phosphate to form lipid A disaccharide, a precursor of lipid A, a phosphorylated glycolipid that anchors the lipopolysaccharide to the outer membrane of the cell. This Rhodopseudomonas palustris (strain BisB18) protein is Lipid-A-disaccharide synthase.